The chain runs to 749 residues: MSGSHTPACGPFSALTPSIWPQEILAKYTQKEESAEQPEFYYDEFGFRVYKEEGDEPGSSLLANSPLMEDAPQRLRWQAHLEFTHNHDVGDLTWDKIAVSLPRSEKLRSLVLAGIPHGMRPQLWMRLSGALQKKRNSELSYREIVKNSSNDETIAAKQIEKDLLRTMPSNACFASMGSIGVPRLRRVLRALAWLYPEIGYCQGTGMVAACLLLFLEEEDAFWMMSAIIEDLLPASYFSTTLLGVQTDQRVLRHLIVQYLPRLDKLLQEHDIELSLITLHWFLTAFASVVDIKLLLRIWDLFFYEGSRVLFQLTLGMLHLKEEELIQSENSASIFNTLSDIPSQMEDAELLLGVAMRLAGSLTDVAVETQRRKHLAYLIADQGQLLGAGTLTNLSQVVRRRTQRRKSTITALLFGEDDLEALKAKNIKQTELVADLREAILRVARHFQCTDPKNCSVELTPDYSMESHQRDHENYVACSRSHRRRAKALLDFERHDDDELGFRKNDIITIVSQKDEHCWVGELNGLRGWFPAKFVEVLDERSKEYSIAGDDSVTEGVTDLVRGTLCPALKALFEHGLKKPSLLGGACHPWLFIEEAAGREVERDFASVYSRLVLCKTFRLDEDGKVLTPEELLYRAVQSVNVTHDAVHAQMDVKLRSLICVGLNEQVLHLWLEVLCSSLPTVEKWYQPWSFLRSPGWVQIKCELRVLCCFAFSLSQDWELPAKREAQQPLKEGVRDMLVKHHLFSWDVDG.

The 192-residue stretch at 114–305 (GIPHGMRPQL…RIWDLFFYEG (192 aa)) folds into the Rab-GAP TBC domain. Position 406 is a phosphoserine (Ser-406). The stretch at 415 to 439 (EDDLEALKAKNIKQTELVADLREAI) forms a coiled coil. The 60-residue stretch at 480–539 (SHRRRAKALLDFERHDDDELGFRKNDIITIVSQKDEHCWVGELNGLRGWFPAKFVEVLDE) folds into the SH3 domain. Residues 555–718 (GVTDLVRGTL…FAFSLSQDWE (164 aa)) form the RUN domain.

The protein belongs to the small G protein signaling modulator family. Interacts with GJA1. Interaction with GJA1 induces its degradation. Interacts via its RUN domain with the C-terminal region of NF2. Interacts with RAB3A, RAB4A, RAB5A, RAB8A, RAB11A, RAP1A, RAP1B, RAP2A, RAP2B and PDCD6IP. No interaction with RAB27A. Widely expressed.

The protein localises to the cytoplasm. In terms of biological role, may play a cooperative role in NF2-mediated growth suppression of cells. The chain is Small G protein signaling modulator 3 from Homo sapiens (Human).